A 145-amino-acid chain; its full sequence is Large ribosomal subunit protein uL16 (145 aa).

This sequence belongs to the universal ribosomal protein uL16 family. Part of the 50S ribosomal subunit.

Binds 23S rRNA and is also seen to make contacts with the A and possibly P site tRNAs. In Shouchella clausii (strain KSM-K16) (Alkalihalobacillus clausii), this protein is Large ribosomal subunit protein uL16.